The following is a 269-amino-acid chain: uncharacterized protein (269 aa).

Helical transmembrane passes span 9–29 (YIIG…AHLF), 50–70 (FMLG…IVPL), 82–102 (FSII…VWAF), 107–127 (LYWT…MYGQ), 147–167 (LVFG…LHCT), 173–193 (VFSN…ILGF), 200–220 (LVSA…HLFA), and 224–244 (IFAF…FLLP).

The protein localises to the membrane. This is an uncharacterized protein from Schizosaccharomyces pombe (strain 972 / ATCC 24843) (Fission yeast).